Reading from the N-terminus, the 156-residue chain is Small ribosomal subunit protein uS7 (156 aa).

This sequence belongs to the universal ribosomal protein uS7 family. In terms of assembly, part of the 30S ribosomal subunit. Contacts proteins S9 and S11.

Its function is as follows. One of the primary rRNA binding proteins, it binds directly to 16S rRNA where it nucleates assembly of the head domain of the 30S subunit. Is located at the subunit interface close to the decoding center, probably blocks exit of the E-site tRNA. The polypeptide is Small ribosomal subunit protein uS7 (Synechocystis sp. (strain ATCC 27184 / PCC 6803 / Kazusa)).